The primary structure comprises 242 residues: Biosynthetic peptidoglycan transglycosylase (242 aa).

Residues 19 to 39 (ILAALAVFWGGGIALFSVVPV) form a helical membrane-spanning segment.

Belongs to the glycosyltransferase 51 family.

It localises to the cell inner membrane. It carries out the reaction [GlcNAc-(1-&gt;4)-Mur2Ac(oyl-L-Ala-gamma-D-Glu-L-Lys-D-Ala-D-Ala)](n)-di-trans,octa-cis-undecaprenyl diphosphate + beta-D-GlcNAc-(1-&gt;4)-Mur2Ac(oyl-L-Ala-gamma-D-Glu-L-Lys-D-Ala-D-Ala)-di-trans,octa-cis-undecaprenyl diphosphate = [GlcNAc-(1-&gt;4)-Mur2Ac(oyl-L-Ala-gamma-D-Glu-L-Lys-D-Ala-D-Ala)](n+1)-di-trans,octa-cis-undecaprenyl diphosphate + di-trans,octa-cis-undecaprenyl diphosphate + H(+). The protein operates within cell wall biogenesis; peptidoglycan biosynthesis. Its function is as follows. Peptidoglycan polymerase that catalyzes glycan chain elongation from lipid-linked precursors. The sequence is that of Biosynthetic peptidoglycan transglycosylase from Salmonella choleraesuis (strain SC-B67).